A 445-amino-acid polypeptide reads, in one-letter code: uncharacterized protein (445 aa).

Transmembrane regions (helical) follow at residues 16 to 36, 52 to 72, 98 to 118, 168 to 188, 219 to 239, 243 to 263, 283 to 303, and 366 to 386; these read IVSLGVTASSFLFINGVAFLI, LLASMPSWGLVVTMFAWGYLL, VHSLLWIGVFLFLGGMAAGGC, GLMFPAVVCTLAAVASVLGIV, ASALLMMPQTVTVTFMLVWLI, GWSVAQAGVLVTISQLLGALG, LIAAAAAATLFLLAAVDNEGS, and AAYPTAWALCGVFPLAAVPLV. Residues 417–445 form a disordered region; the sequence is AWPNGPRRPGPPGQPRRVRQGGTAITPPT.

Belongs to the major facilitator superfamily.

The protein resides in the cell membrane. This is an uncharacterized protein from Mycobacterium tuberculosis (strain ATCC 25618 / H37Rv).